The sequence spans 175 residues: Type-2 ice-structuring protein (175 aa).

An N-terminal signal peptide occupies residues Met-1–Ala-16. Positions Ala-17–Lys-33 are excised as a propeptide. Residues Thr-36–Ala-163 form the C-type lectin domain. Disulfide bonds link Cys-38–Cys-49, Cys-66–Cys-159, Cys-103–Cys-134, Cys-123–Cys-145, and Cys-135–Cys-151.

Its subcellular location is the secreted. Antifreeze proteins lower the blood freezing point. This is Type-2 ice-structuring protein from Osmerus mordax (Rainbow smelt).